A 208-amino-acid chain; its full sequence is Small ribosomal subunit protein uS4 (208 aa).

The region spanning 98-163 (TRLDNVVFRL…TPLFKEIVDG (66 aa)) is the S4 RNA-binding domain.

The protein belongs to the universal ribosomal protein uS4 family. As to quaternary structure, part of the 30S ribosomal subunit. Contacts protein S5. The interaction surface between S4 and S5 is involved in control of translational fidelity.

In terms of biological role, one of the primary rRNA binding proteins, it binds directly to 16S rRNA where it nucleates assembly of the body of the 30S subunit. Functionally, with S5 and S12 plays an important role in translational accuracy. The protein is Small ribosomal subunit protein uS4 of Heliobacterium modesticaldum (strain ATCC 51547 / Ice1).